We begin with the raw amino-acid sequence, 244 residues long: Salivary antigen-5 (244 aa).

Positions 1–23 are cleaved as a signal peptide; that stretch reads MAKAHSSLVFCLLALALVRFAQA. Residues 46-202 enclose the SCP domain; that stretch reads LDFHNKFREL…WYTGYLVCNY (157 aa). Asn106 and Asn172 each carry an N-linked (GlcNAc...) asparagine glycan.

The protein belongs to the CRISP family. Venom allergen 5-like subfamily. In terms of tissue distribution, salivary gland (at protein level).

The protein localises to the secreted. Its function is as follows. Inhibits host platelet aggregation induced by low doses of collagen. This is Salivary antigen-5 from Triatoma infestans (Assassin bug).